The following is a 199-amino-acid chain: uncharacterized protein (199 aa).

The helical transmembrane segment at 17–37 (AGAVTLGIGFFALASALWFLI) threads the bilayer.

The protein localises to the membrane. This is an uncharacterized protein from Homo sapiens (Human).